Reading from the N-terminus, the 367-residue chain is Serine/threonine-protein kinase Sgk2 (367 aa).

The interval 1–26 is disordered; the sequence is MNSSPAGTPSPQPSRANGNINLGPSA. Phosphoserine is present on S10. The region spanning 35 to 292 is the Protein kinase domain; it reads FDFLKVIGKG…FLEIKNHVFF (258 aa). ATP-binding positions include 41-49 and K64; that span reads IGKGNYGKV. The short motif at 68–78 is the Nuclear localization signal element; it reads KKSILKKKEQS. D159 (proton acceptor) is an active-site residue. T193 is subject to Phosphothreonine; by PDPK1. Residues 293 to 367 form the AGC-kinase C-terminal domain; sequence SPINWDDLYH…APEDDDILDC (75 aa). 2 positions are modified to phosphoserine: S334 and S356. At Y357 the chain carries Phosphotyrosine.

Belongs to the protein kinase superfamily. AGC Ser/Thr protein kinase family. In terms of processing, activated by phosphorylation on Ser-356 by an unknown kinase (may be mTORC2 but not confirmed), transforming it into a substrate for PDPK1 which then phosphorylates it on Thr-193. Highly expressed in liver, kidney and pancreas, and at lower levels in brain.

Its subcellular location is the cytoplasm. It localises to the nucleus. It carries out the reaction L-seryl-[protein] + ATP = O-phospho-L-seryl-[protein] + ADP + H(+). It catalyses the reaction L-threonyl-[protein] + ATP = O-phospho-L-threonyl-[protein] + ADP + H(+). Its activity is regulated as follows. Two specific sites, one in the kinase domain (Thr-193) and the other in the C-terminal regulatory region (Ser-356), need to be phosphorylated for its full activation. Its function is as follows. Serine/threonine-protein kinase which is involved in the regulation of a wide variety of ion channels, membrane transporters, cell growth, survival and proliferation. Up-regulates Na(+) channels: SCNN1A/ENAC, K(+) channels: KCNA3/Kv1.3, KCNE1 and KCNQ1, amino acid transporter: SLC6A19, glutamate transporter: SLC1A6/EAAT4, glutamate receptors: GRIA1/GLUR1 and GRIK2/GLUR6, Na(+)/H(+) exchanger: SLC9A3/NHE3, and the Na(+)/K(+) ATPase. The polypeptide is Serine/threonine-protein kinase Sgk2 (SGK2) (Homo sapiens (Human)).